The following is a 202-amino-acid chain: Flagellar transcriptional regulator FlhC (202 aa).

Zn(2+) is bound by residues Cys137, Cys140, Cys157, and Cys160.

Belongs to the FlhC family. Heterohexamer composed of two FlhC and four FlhD subunits. Each FlhC binds a FlhD dimer, forming a heterotrimer, and a hexamer assembles by dimerization of two heterotrimers. Requires Zn(2+) as cofactor.

The protein localises to the cytoplasm. Functionally, functions in complex with FlhD as a master transcriptional regulator that regulates transcription of several flagellar and non-flagellar operons by binding to their promoter region. Activates expression of class 2 flagellar genes, including fliA, which is a flagellum-specific sigma factor that turns on the class 3 genes. Also regulates genes whose products function in a variety of physiological pathways. This chain is Flagellar transcriptional regulator FlhC, found in Variovorax paradoxus (strain S110).